The chain runs to 293 residues: Protein PET54 (293 aa).

The protein resides in the mitochondrion inner membrane. Its function is as follows. Activator of specific mitochondrial mRNAs. PET54 is involved in the excision of intron aI5-beta from pre-mRNA for cytochrome c oxidase I (COX1) and plays a role in promoting the translation of COX3. The protein is Protein PET54 (PET54) of Saccharomyces cerevisiae (strain ATCC 204508 / S288c) (Baker's yeast).